The primary structure comprises 283 residues: Elongation factor Ts (283 aa).

Residues 82-85 are involved in Mg(2+) ion dislocation from EF-Tu; sequence TDFV.

It belongs to the EF-Ts family.

It is found in the cytoplasm. In terms of biological role, associates with the EF-Tu.GDP complex and induces the exchange of GDP to GTP. It remains bound to the aminoacyl-tRNA.EF-Tu.GTP complex up to the GTP hydrolysis stage on the ribosome. The sequence is that of Elongation factor Ts from Photorhabdus laumondii subsp. laumondii (strain DSM 15139 / CIP 105565 / TT01) (Photorhabdus luminescens subsp. laumondii).